A 275-amino-acid polypeptide reads, in one-letter code: Elongation factor Ts (275 aa).

The tract at residues 76-79 (TDFV) is involved in Mg(2+) ion dislocation from EF-Tu.

The protein belongs to the EF-Ts family.

The protein resides in the cytoplasm. Functionally, associates with the EF-Tu.GDP complex and induces the exchange of GDP to GTP. It remains bound to the aminoacyl-tRNA.EF-Tu.GTP complex up to the GTP hydrolysis stage on the ribosome. This chain is Elongation factor Ts, found in Mycobacterium avium (strain 104).